A 365-amino-acid polypeptide reads, in one-letter code: Forkhead box protein E4 (365 aa).

Residues 1 to 13 (MDSPDSVRVKCES) are compositionally biased toward basic and acidic residues. A disordered region spans residues 1-46 (MDSPDSVRVKCESKGSCSPEEGLNNGLPEEHNQASGGRRRKRPVQR). The fork-head DNA-binding region spans 48-142 (KPPYSYIALI…DNGSFLRRRK (95 aa)).

First expressed at the end of gastrulation (stage 13) in the anterior ectodermal placode. During intermediate neural plate stages (stages 14-16), expression expands to the presumptive nasal ectoderm (PNE) and the presumptive lens ectoderm (PLE). By stages 18-21, expression begins to deplete in the PNE, while intensifying in the PLE so that by late neural stages (stages 22), expression is restricted to the PLE. Throughout tailbud stages (stage 23-31), expression is maintained in the lens placode and lens vesicle. In the maturing lens (stage 32-onwards), expression is restricted to the anterior lens epithelium, where it remains during the tadpole stage. In tadpoles there is additional expression in the ventral midline of the pharynx. Expression continues in the adult eye.

The protein resides in the nucleus. Its function is as follows. Probable transcription factor. Mediates lens formation in the embryo by promoting the proliferation of the specified lens ectoderm and suppressing its terminal differentiation. In Xenopus laevis (African clawed frog), this protein is Forkhead box protein E4.